We begin with the raw amino-acid sequence, 177 residues long: Large ribosomal subunit protein uL6 (177 aa).

The protein belongs to the universal ribosomal protein uL6 family. Part of the 50S ribosomal subunit.

In terms of biological role, this protein binds to the 23S rRNA, and is important in its secondary structure. It is located near the subunit interface in the base of the L7/L12 stalk, and near the tRNA binding site of the peptidyltransferase center. In Brucella abortus (strain S19), this protein is Large ribosomal subunit protein uL6.